A 301-amino-acid polypeptide reads, in one-letter code: Small ribosomal subunit protein uS2 (301 aa).

This sequence belongs to the universal ribosomal protein uS2 family.

The sequence is that of Small ribosomal subunit protein uS2 from Acidobacterium capsulatum (strain ATCC 51196 / DSM 11244 / BCRC 80197 / JCM 7670 / NBRC 15755 / NCIMB 13165 / 161).